We begin with the raw amino-acid sequence, 412 residues long: Multifunctional CCA protein (412 aa).

G8 and R11 together coordinate ATP. Positions 8 and 11 each coordinate CTP. Residues D21 and D23 each coordinate Mg(2+). R91, R137, and R140 together coordinate ATP. Residues R91, R137, and R140 each contribute to the CTP site. The HD domain maps to 228-329 (TGIHTLMTLS…VKLFDSIDAW (102 aa)).

It belongs to the tRNA nucleotidyltransferase/poly(A) polymerase family. Bacterial CCA-adding enzyme type 1 subfamily. As to quaternary structure, monomer. Can also form homodimers and oligomers. It depends on Mg(2+) as a cofactor. Ni(2+) serves as cofactor.

It catalyses the reaction a tRNA precursor + 2 CTP + ATP = a tRNA with a 3' CCA end + 3 diphosphate. It carries out the reaction a tRNA with a 3' CCA end + 2 CTP + ATP = a tRNA with a 3' CCACCA end + 3 diphosphate. In terms of biological role, catalyzes the addition and repair of the essential 3'-terminal CCA sequence in tRNAs without using a nucleic acid template. Adds these three nucleotides in the order of C, C, and A to the tRNA nucleotide-73, using CTP and ATP as substrates and producing inorganic pyrophosphate. tRNA 3'-terminal CCA addition is required both for tRNA processing and repair. Also involved in tRNA surveillance by mediating tandem CCA addition to generate a CCACCA at the 3' terminus of unstable tRNAs. While stable tRNAs receive only 3'-terminal CCA, unstable tRNAs are marked with CCACCA and rapidly degraded. The chain is Multifunctional CCA protein from Escherichia coli O7:K1 (strain IAI39 / ExPEC).